A 397-amino-acid polypeptide reads, in one-letter code: Natural killer cell receptor 2B4 (397 aa).

Positions 1 to 19 (MLGQAVLFTTFLLLRAHQG) are cleaved as a signal peptide. At 20–226 (QDCPDSSEEV…SVPSNFRFLP (207 aa)) the chain is on the extracellular side. Cys22 and Cys119 are joined by a disulfide. 2 Ig-like domains span residues 22–129 (CPDS…LILD) and 131–215 (VETP…THGC). Residues Asn78, Asn145, Asn161, Asn178, Asn197, Asn206, and Asn210 are each glycosylated (N-linked (GlcNAc...) asparagine). An intrachain disulfide couples Cys154 to Cys196. Residues 227–247 (FGVIIVILVTLFLGAIICFCV) form a helical membrane-spanning segment. The Cytoplasmic segment spans residues 248 to 397 (WTKKRKQLQF…RELENFDVYS (150 aa)). Residues 264–269 (TIYEYV) carry the ITSM 1 motif. Tyr266 bears the Phosphotyrosine mark. Residues 277-290 (DQQGCSRASGSPSA) are compositionally biased toward polar residues. Residues 277-300 (DQQGCSRASGSPSAVQEDGRGQRE) are disordered. 3 short sequence motifs (ITSM) span residues 323–328 (TMYSMI), 342–347 (TVYSVV), and 367–372 (TVYEEV). The residue at position 325 (Tyr325) is a Phosphotyrosine; by FYN. Phosphotyrosine is present on Tyr344. A Phosphotyrosine; by FYN modification is found at Tyr369.

Interacts with CD48. Interacts (via phosphorylated ITSM 1-4) with SH2D1A/SAP (via SH2 domain); SH2D1A probably mediates association with FYN. Interacts (via phosphorylated ITSM 3) with PTPN11/SHP-2, INPP5D/SHIP1, PTPN6/SHP-1 and CSK; binding of SH2D1A prevents association with PTPN11, PTPN6 and CSK. Interacts weakly (via phosphorylated ITSM 2) with PTPN11 and CSK. Interacts with SH2D1B and SH2D1B2. Interacts with MHC class I proteins; the interaction is proposed to prevent self-killing of NK cells. Post-translationally, N-linked glycosylation is essential for the binding to its ligand CD48. Also O-glycosylated, in contrast, O-linked sialylation has a negative impact on ligand binding. Phosphorylated by FYN and CSK on tyrosine residues following activation. Coligation with inhibitory receptors such as KIR2DL1 inhibits phosphorylation upon contact of NK cells with sensitive target cells. In terms of tissue distribution, expressed in natural killer (NK) cells, T cells and dendritic cells.

It is found in the membrane. The protein resides in the cell membrane. Its subcellular location is the membrane raft. Its function is as follows. Heterophilic receptor of the signaling lymphocytic activation molecule (SLAM) family; its ligand is CD48. SLAM receptors triggered by homo- or heterotypic cell-cell interactions are modulating the activation and differentiation of a wide variety of immune cells and thus are involved in the regulation and interconnection of both innate and adaptive immune response. Activities are controlled by presence or absence of small cytoplasmic adapter proteins, SH2D1A/SAP and/or SH2D1B/EAT-2. Acts as activating natural killer (NK) cell receptor. Activating function implicates association with SH2D1A and FYN. Downstreaming signaling involves predominantly VAV1, and, to a lesser degree, INPP5D/SHIP1 and CBL. Signal attenuation in the absence of SH2D1A is proposed to be dependent on INPP5D and to a lesser extent PTPN6/SHP-1 and PTPN11/SHP-2. Stimulates NK cell cytotoxicity, production of IFN-gamma and granule exocytosis. Optimal expansion and activation of NK cells seems to be dependent on the engagement of CD244 with CD48 expressed on neighboring NK cells. Regulation of NK cell activity by adapters Sh2d1b and Sh2d1b2 is reported conflictingly. Acts as costimulator in NK activation by enhancing signals by other NK receptors such as NCR3 and NCR1. At early stages of NK cell differentiation may function as an inhibitory receptor possibly ensuring the self-tolerance of developing NK cells. Involved in the regulation of CD8(+) T-cell proliferation; expression on activated T-cells and binding to CD48 provides costimulatory-like function for neighboring T-cells. Inhibits inflammatory responses in dendritic cells (DCs). In Mus musculus (Mouse), this protein is Natural killer cell receptor 2B4 (Cd244).